Reading from the N-terminus, the 668-residue chain is Alpha-1,4-glucan:maltose-1-phosphate maltosyltransferase (668 aa).

The segment at 263-288 (RKGRNNSLTPAPDDPGSPYAIGSEEG) is disordered. Alpha-maltose 1-phosphate-binding residues include Lys-264, Gln-324, and Asp-359. Asp-395 (nucleophile) is an active-site residue. Asn-396 is a binding site for alpha-maltose 1-phosphate. Catalysis depends on Glu-424, which acts as the Proton donor. Residue 535–536 (KY) coordinates alpha-maltose 1-phosphate.

It belongs to the glycosyl hydrolase 13 family. GlgE subfamily. Homodimer.

It carries out the reaction alpha-maltose 1-phosphate + [(1-&gt;4)-alpha-D-glucosyl](n) = [(1-&gt;4)-alpha-D-glucosyl](n+2) + phosphate. Maltosyltransferase that uses maltose 1-phosphate (M1P) as the sugar donor to elongate linear or branched alpha-(1-&gt;4)-glucans. Is involved in a branched alpha-glucan biosynthetic pathway from trehalose, together with TreS, Mak and GlgB. The chain is Alpha-1,4-glucan:maltose-1-phosphate maltosyltransferase from Cereibacter sphaeroides (strain ATCC 17023 / DSM 158 / JCM 6121 / CCUG 31486 / LMG 2827 / NBRC 12203 / NCIMB 8253 / ATH 2.4.1.) (Rhodobacter sphaeroides).